The primary structure comprises 225 residues: MMKKAVVLLSGGLDSATCLAIARSQGFESYCLSFNYGQRHCAELVAADRVVKALGAAEHRVLNFGLAQFGGSALTDTNIAVPTEGVQPGIPVTYVPARNTIMLSLALAWAEVLGSRDIFVGVNAVDYSGYPDCRPEYIAAFETMANLATKAGVEGHKLSIHAPLIDLSKAEIIRTGAALGVDYSLTVSCYQADEQGRACGVCDSCRLRAEGFAAAGLADPTLYRA.

An ATP-binding site is contributed by 9 to 19 (LSGGLDSATCL). Zn(2+)-binding residues include Cys-189, Cys-199, Cys-202, and Cys-205.

The protein belongs to the QueC family. Requires Zn(2+) as cofactor.

It catalyses the reaction 7-carboxy-7-deazaguanine + NH4(+) + ATP = 7-cyano-7-deazaguanine + ADP + phosphate + H2O + H(+). Its pathway is purine metabolism; 7-cyano-7-deazaguanine biosynthesis. In terms of biological role, catalyzes the ATP-dependent conversion of 7-carboxy-7-deazaguanine (CDG) to 7-cyano-7-deazaguanine (preQ(0)). The polypeptide is 7-cyano-7-deazaguanine synthase (Dechloromonas aromatica (strain RCB)).